We begin with the raw amino-acid sequence, 637 residues long: Biosynthetic arginine decarboxylase (637 aa).

An N6-(pyridoxal phosphate)lysine modification is found at Lys-101. 286 to 296 serves as a coordination point for substrate; the sequence is FDVGGGLAVDY.

This sequence belongs to the Orn/Lys/Arg decarboxylase class-II family. SpeA subfamily. It depends on Mg(2+) as a cofactor. Requires pyridoxal 5'-phosphate as cofactor.

It carries out the reaction L-arginine + H(+) = agmatine + CO2. It functions in the pathway amine and polyamine biosynthesis; agmatine biosynthesis; agmatine from L-arginine: step 1/1. Catalyzes the biosynthesis of agmatine from arginine. The protein is Biosynthetic arginine decarboxylase of Shewanella baltica (strain OS195).